A 688-amino-acid polypeptide reads, in one-letter code: Beta-galactosidase BglY (688 aa).

R118 is a binding site for substrate. C122 serves as a coordination point for Zn(2+). N156 contributes to the substrate binding site. E157 (proton donor) is an active-site residue. Positions 162, 164, and 167 each coordinate Zn(2+). The active-site Nucleophile is the E313. Residues W321 and E361–H364 contribute to the substrate site.

Belongs to the glycosyl hydrolase 42 family.

The catalysed reaction is Hydrolysis of terminal non-reducing beta-D-galactose residues in beta-D-galactosides.. With respect to regulation, ca(2+), Mg(2+) and EDTA have little effect on enzyme activity at 1-10 mM. Zn(2+) at 3, 5, 7 or 10 mM inhibits activity by 20%, 30%, 40% and 65%, respectively. Hydrolyzes o-nitrophenyl-beta-D-galactopyranoside (ONPG) and p-nitrophenyl-beta-D-fucopyranoside (PNPF), but not p-nitrophenyl-beta-D-glucopyranoside (PNPG), p-nitrophenyl-beta-D-xylopyranoside (PNPX) or p-nitrophenyl-beta-D-arabinopyranoside (PNPA). Also hydrolyzes lactose, including lactose in milk. The protein is Beta-galactosidase BglY (bglY) of Alicyclobacillus acidocaldarius subsp. acidocaldarius (strain ATCC 27009 / DSM 446 / BCRC 14685 / JCM 5260 / KCTC 1825 / NBRC 15652 / NCIMB 11725 / NRRL B-14509 / 104-IA) (Bacillus acidocaldarius).